A 204-amino-acid chain; its full sequence is ADP-ribosylation factor-like protein 15 (204 aa).

GTP contacts are provided by residues 39 to 46, 82 to 86, and 142 to 145; these read GLTGSGKT, ELGGA, and NHQD.

This sequence belongs to the small GTPase superfamily. Arf family.

This Homo sapiens (Human) protein is ADP-ribosylation factor-like protein 15 (ARL15).